The following is a 282-amino-acid chain: Nucleotide-binding protein XCV3122 (282 aa).

5-12 is a binding site for ATP; that stretch reads GLSGSGKS. 57 to 60 contributes to the GTP binding site; the sequence is DVRS.

The protein belongs to the RapZ-like family.

Its function is as follows. Displays ATPase and GTPase activities. The polypeptide is Nucleotide-binding protein XCV3122 (Xanthomonas euvesicatoria pv. vesicatoria (strain 85-10) (Xanthomonas campestris pv. vesicatoria)).